Reading from the N-terminus, the 150-residue chain is Cell division protein SepF (150 aa).

This sequence belongs to the SepF family. As to quaternary structure, homodimer. Interacts with FtsZ.

Its subcellular location is the cytoplasm. Cell division protein that is part of the divisome complex and is recruited early to the Z-ring. Probably stimulates Z-ring formation, perhaps through the cross-linking of FtsZ protofilaments. Its function overlaps with FtsA. This is Cell division protein SepF from Clostridium botulinum (strain ATCC 19397 / Type A).